The chain runs to 199 residues: Recombination protein RecR (199 aa).

Residues 57-72 (CSSCRTFTEESLCPIC) form a C4-type zinc finger. The 96-residue stretch at 81-176 (DLICVVETPA…NVSRIAHGVP (96 aa)) folds into the Toprim domain.

It belongs to the RecR family.

Functionally, may play a role in DNA repair. It seems to be involved in an RecBC-independent recombinational process of DNA repair. It may act with RecF and RecO. The polypeptide is Recombination protein RecR (Shewanella loihica (strain ATCC BAA-1088 / PV-4)).